The primary structure comprises 1125 residues: Probable phospholipid-transporting ATPase IIB (1125 aa).

Residues Met-1–Thr-131 lie on the Cytoplasmic side of the membrane. A helical membrane pass occupies residues Phe-132–Val-152. The Extracellular portion of the chain corresponds to Ala-153–Leu-161. A helical transmembrane segment spans residues Lys-162–Val-182. The Cytoplasmic portion of the chain corresponds to Arg-183 to Lys-369. The chain crosses the membrane as a helical span at residues Ala-370–Gly-390. Residues Pro-391–Asn-395 lie on the Extracellular side of the membrane. Residues Leu-396 to Leu-415 form a helical membrane-spanning segment. At Asp-416–Gly-928 the chain is on the cytoplasmic side. Catalysis depends on Asp-455, which acts as the 4-aspartylphosphate intermediate. ATP-binding residues include Asp-455, Lys-456, and Thr-457. Residue Asp-455 participates in Mg(2+) binding. Position 457 (Thr-457) interacts with Mg(2+). Residues Gln-500 to Ser-511 show a composition bias toward low complexity. Disordered regions lie at residues Gln-500–Val-525 and Gly-552–Gln-574. Positions Glu-558 to Ser-567 are enriched in acidic residues. Glu-580, Phe-622, Lys-627, Lys-646, Arg-675, Thr-676, Thr-755, Gly-756, Asp-757, Arg-837, and Lys-843 together coordinate ATP. Mg(2+) is bound at residue Asp-863. Asn-866 and Asp-867 together coordinate ATP. Asp-867 contacts Mg(2+). Residues Met-929 to Leu-949 traverse the membrane as a helical segment. Topologically, residues Tyr-950–Gln-951 are extracellular. Residues Gly-952–Leu-972 traverse the membrane as a helical segment. Topologically, residues Asp-973–Thr-1001 are cytoplasmic. The helical transmembrane segment at Phe-1002 to Val-1022 threads the bilayer. The Extracellular portion of the chain corresponds to Leu-1023–His-1030. Residues Val-1031–Ile-1051 form a helical membrane-spanning segment. Residues Arg-1052 to His-1055 lie on the Cytoplasmic side of the membrane. A helical membrane pass occupies residues Trp-1056 to Leu-1076. The Extracellular segment spans residues Asn-1077–Arg-1088. The helical transmembrane segment at Val-1089 to Lys-1109 threads the bilayer. Residues Tyr-1110–Ser-1125 are Cytoplasmic-facing.

This sequence belongs to the cation transport ATPase (P-type) (TC 3.A.3) family. Type IV subfamily. Requires Mg(2+) as cofactor.

It is found in the golgi apparatus. The protein localises to the trans-Golgi network membrane. It carries out the reaction ATP + H2O + phospholipidSide 1 = ADP + phosphate + phospholipidSide 2.. This chain is Probable phospholipid-transporting ATPase IIB (atp9b), found in Danio rerio (Zebrafish).